We begin with the raw amino-acid sequence, 1356 residues long: Vascular endothelial growth factor receptor 2 (1356 aa).

The first 19 residues, 1–19 (MQSKVLLAVALWLCVETRA), serve as a signal peptide directing secretion. Over 20–764 (ASVGLPSVSL…EGAQEKTNLE (745 aa)) the chain is Extracellular. N-linked (GlcNAc...) asparagine glycosylation is found at N46, N66, N96, N143, N158, and N245. Ig-like C2-type domains lie at 46-110 (NTTL…ETDL), 141-207 (NKNK…INDE), 224-320 (YDVV…KNST), 328-414 (PFVA…HVVS), 421-548 (PQIG…FHVT), 551-660 (PEIT…RQLT), and 667-753 (PTIT…AFFI). Residues C53 and C103 are joined by a disulfide bond. A disulfide bond links C150 and C200. An intrachain disulfide couples C246 to C307. N-linked (GlcNAc...) asparagine glycans are attached at residues N318, N374, N395, N511, N523, N580, N613, N619, N631, N675, N704, and N721. Disulfide bonds link C445-C530 and C571-C642. An intrachain disulfide couples C688 to C737. A helical membrane pass occupies residues 765 to 785 (IIILVGTAVIAMFFWLLLVII). Residues 786–1356 (LRTVKRANGG…SGTTLSSPPV (571 aa)) are Cytoplasmic-facing. Phosphotyrosine is present on Y801. The region spanning 834–1162 (LKLGKPLGRG…FSELVEHLGN (329 aa)) is the Protein kinase domain. Residues 840–848 (LGRGAFGQV) and K868 contribute to the ATP site. Phosphotyrosine; by autocatalysis is present on Y951. Phosphoserine is present on residues S982 and S984. At Y996 the chain carries Phosphotyrosine; by autocatalysis. A disulfide bridge links C1024 with C1045. D1028 functions as the Proton acceptor in the catalytic mechanism. Phosphotyrosine; by autocatalysis is present on residues Y1054, Y1059, Y1175, and Y1214. Residues S1231 and S1235 each carry the phosphoserine modification. T1238 bears the Phosphothreonine mark. Residues 1274-1318 (DRTKLSPSFGGMVPSKSRESVASEGSNQTSGYQSGYHSDDTDTTV) are disordered. The span at 1296–1309 (SEGSNQTSGYQSGY) shows a compositional bias: polar residues. Y1305, Y1309, and Y1319 each carry phosphotyrosine; by autocatalysis.

The protein belongs to the protein kinase superfamily. Tyr protein kinase family. CSF-1/PDGF receptor subfamily. As to quaternary structure, homodimer in the presence of bound dimeric VEGFA, VEGFC or VEGFD ligands; monomeric in the absence of bound ligands. Can also form heterodimers with FLT1/VEGFR1 and KDR/VEGFR2. Interacts (tyrosine phosphorylated) with LFYN, NCK1, PLCG1. Interacts (tyrosine-phosphorylated active form preferentially) with DAB2IP (via C2 domain and active form preferentially); the interaction occurs at the late phase of VEGFA response and inhibits KDR/VEGFR2 activity. Interacts with SHBSH2D2A/TSAD, GRB2, MYOF, CBL and PDCD6. Interacts (via C-terminus domain) with ERN1 (via kinase domain); the interaction is facilitated in a XBP1 isoform 1- and vascular endothelial growth factor (VEGF)-dependent manner in endothelial cells. Interacts (via juxtamembrane region) with chaperone PDCL3 (via thioredoxin fold region); the interaction leads to increased KDR/VEGFR2 abundance through inhibition of its ubiquitination and degradation. Interacts (tyrosine phosphorylated) with CCDC88A/GIV (via SH2-like region); binding requires autophosphorylation of the KDR/VEGFR2 C-terminal region. Interacts with isoform 2 of BSG. Interacts with SLC31A1; this interaction is induced upon VEGFA stimulation leading to SLC31A1 and KDR subsequent co-internalization to early endosomes, thereby activating KDR downstream signaling in endothelial cells. In terms of assembly, (Microbial infection) Interacts with HIV-1 Tat. In terms of processing, N-glycosylated. Ubiquitinated. Tyrosine phosphorylation of the receptor promotes its poly-ubiquitination, leading to its degradation via the proteasome or lysosomal proteases. Post-translationally, autophosphorylated on tyrosine residues upon ligand binding. Autophosphorylation occurs in trans, i.e. one subunit of the dimeric receptor phosphorylates tyrosine residues on the other subunit. Phosphorylation at Tyr-951 is important for interaction with SH2D2A/TSAD and VEGFA-mediated reorganization of the actin cytoskeleton. Phosphorylation at Tyr-1175 is important for interaction with PLCG1 and SHB. Phosphorylation at Tyr-1214 is important for interaction with NCK1 and FYN. Dephosphorylated by PTPRB. Dephosphorylated by PTPRJ at Tyr-951, Tyr-996, Tyr-1054, Tyr-1059, Tyr-1175 and Tyr-1214. In terms of processing, the inhibitory disulfide bond between Cys-1024 and Cys-1045 may serve as a specific molecular switch for H(2)S-induced modification that regulates KDR/VEGFR2 function. As to expression, detected in cornea (at protein level). Widely expressed.

Its subcellular location is the cell junction. It localises to the endoplasmic reticulum. The protein localises to the cell membrane. The protein resides in the cytoplasm. It is found in the nucleus. Its subcellular location is the cytoplasmic vesicle. It localises to the early endosome. The protein localises to the secreted. It carries out the reaction L-tyrosyl-[protein] + ATP = O-phospho-L-tyrosyl-[protein] + ADP + H(+). With respect to regulation, present in an inactive conformation in the absence of bound ligand. Binding of VEGFA, VEGFC or VEGFD leads to dimerization and activation by autophosphorylation on tyrosine residues. Inhibited by the small molecule PTK inhibitor SU5614 ((3Z)-5-Chloro-3-[(3,5-dimethyl-1H-pyrrol-2-yl)methylene]-1,3-dihydro-2H-indol-2-one). May be regulated by hydrogen sulfide (H(2)S) levels via a H(2)S-sensitive intracellular disulfide bond. Functionally, tyrosine-protein kinase that acts as a cell-surface receptor for VEGFA, VEGFC and VEGFD. Plays an essential role in the regulation of angiogenesis, vascular development, vascular permeability, and embryonic hematopoiesis. Promotes proliferation, survival, migration and differentiation of endothelial cells. Promotes reorganization of the actin cytoskeleton. Isoforms lacking a transmembrane domain, such as isoform 2 and isoform 3, may function as decoy receptors for VEGFA, VEGFC and/or VEGFD. Isoform 2 plays an important role as negative regulator of VEGFA- and VEGFC-mediated lymphangiogenesis by limiting the amount of free VEGFA and/or VEGFC and preventing their binding to FLT4. Modulates FLT1 and FLT4 signaling by forming heterodimers. Binding of vascular growth factors to isoform 1 leads to the activation of several signaling cascades. Activation of PLCG1 leads to the production of the cellular signaling molecules diacylglycerol and inositol 1,4,5-trisphosphate and the activation of protein kinase C. Mediates activation of MAPK1/ERK2, MAPK3/ERK1 and the MAP kinase signaling pathway, as well as of the AKT1 signaling pathway. Mediates phosphorylation of PIK3R1, the regulatory subunit of phosphatidylinositol 3-kinase, reorganization of the actin cytoskeleton and activation of PTK2/FAK1. Required for VEGFA-mediated induction of NOS2 and NOS3, leading to the production of the signaling molecule nitric oxide (NO) by endothelial cells. Phosphorylates PLCG1. Promotes phosphorylation of FYN, NCK1, NOS3, PIK3R1, PTK2/FAK1 and SRC. The polypeptide is Vascular endothelial growth factor receptor 2 (Homo sapiens (Human)).